Here is a 2718-residue protein sequence, read N- to C-terminus: MPRTKQIHPRNLRDKIEEAQKELNGAEVSKKEILQAGVKGTSESLKGVKRKKIVAENHLKKIPKSPLRNPLQAKHKQNTEESSFAVLHSASESHKKQNYIPVKNGKQFTKQNGETPGIIAEASKSEESVSPKKPLFLQQPSELRRWRSEGADPAKFSDLDEQCDSSSLSSKTRTDNSECISSHCGTTSPSYTNTAFDVLLKAMEPELSTLSQKGSPCAIKTEKLRPNKTARSPPKLKNSSMDAPNQTSQELVAESQSSCTSYTVHMSAAQKNEQGAMQSASHLYHQHEHFVPKSNQHNQQLPGCSGFTGSLTNLQNQENAKLEQVYNIAVTSSVGLTSPSSRSQVTPQNQQMDSASPLSISPANSTQSPPMPIYNSTHVASVVNQSVEQMCNLLLKDQKPKKQGKYICEYCNRACAKPSVLLKHIRSHTGERPYPCVTCGFSFKTKSNLYKHKKSHAHTIKLGLVLQPDAGGLFLSHESPKALSIHSDVEDSGESEEEGATDERQHDLGAMELQPVHIIKRMSNAETLLKSSFTPSSPENVIGDFLLQDRSAESQAVTELPKVVVHHVTVSPLRTDSPKAMDPKPELSSAQKQKDLQVTNVQPLSANMSQGGVSRLETNENSHQKGDMNPLEGKQDSHVGTVHAQLQRQQATDYSQEQQGKLLSPRSLGSTDSGYFSRSESADQTVSPPTPFARRLPSTEQDSGRSNGPSAALVTTSTPSALPTGEKALLLPGQMRPPLATKTLEERISKLISDNEALVDDKQLDSVKPRRTSLSRRGSIDSPKSYIFKDSFQFDLKPVGRRTSSSSDIPKSPFTPTEKSKQVFLLSVPSLDCLPITRSNSMPTTGYSAVPANIIPPPHPLRGSQSFDDKIGAFYDDVFVSGPNAPVPQSGHPRTLVRQAAIEDSSANESHVLGTGQSLDESHQGCHAAGEAMSVRSKALAQGPHIEKKKSHQGRGTMFECETCRNRYRKLENFENHKKFYCSELHGPKTKVAMREPEHSPVPGGLQPQILHYRVAGSSGIWEQTPQIRKRRKMKSVGDDEELQQNESGTSPKSSEGLQFQNALGCNPSLPKHNVTIRSDQQHKNIQLQNSHIHLVARGPEQTMDPKLSTIMEQQISSAAQDKIELQRHGTGISVIQHTNSLSRPNSFDKPEPFERASPVSFQELNRTGKSGSLKVIGISQEESHPSRDGSHPHQLALSDALRGELQESSRKSPSERHVLGQPSRLVRQHNIQVPEILVTEEPDRDLEAQCHDQEKSEKFSWPQRSETLSKLPTEKLPPKKKRLRLAEIEHSSTESSFDSTLSRSLSRESSLSHTSSFSASLDIEDVSKTEASPKIDFLNKAEFLMIPAGLNTLNVPGCHREMRRTASEQINCTQTSMEVSDLRSKSFDCGSITPPQTTPLTELQPPSSPSRVGVTGHVPLLERRRGPLVRQISLNIAPDSHLSPVHPTSFQNTALPSVNAVPYQGPQLTSTSLAEFSANTLHSQTQVKDLQAETSNSSSTNVFPVQQLCDINLLNQIHAPPSHQSTQLSLQVSTQGSKPDKNSVLSGSSKSEDCFAPKYQLHCQVFTSGPSCSSNPVHSLPNQVISDPVGTDHCVTSATLPTKLIDSMSNSHPLLPPELRPLGSQVQKVPSSFMLPIRLQSSVPAYCFATLTSLPQILVTQDLPNQPICQTNHSVVPISEEQNSVPTLQKGHQNALPNPEKEFLCENVFSEMSQNSSLSESLPITQKISVGRLSPQQESSASSKRMLSPANSLDIAMEKHQKRAKDENGAVCATDVRPLEALSSRVNEASKQKKPILVRQVCTTEPLDGVMLEKDVFSQPEISNEAVNLTNVLPADNSSTGCSKFVVIEPISELQEFENIKSSTSLTLTVRSSPAPSENTHISPLKCTDNNQERKSPGVKNQGDKVNIQEQSQQPVTSLSLFNIKDTQQLAFPSLKTTTNFTWCYLLRQKSLHLPQKDQKTSAYTDWTVSASNPNPLGLPTKVALALLNSKQNTGKSLYCQAITTHSKSDLLVYSSKWKSSLSKRALGNQKSTVVEFSNKDASEINSEQDKENSLIKSEPRRIKIFDGGYKSNEEYVYVRGRGRGKYICEECGIRCKKPSMLKKHIRTHTDVRPYHCTYCNFSFKTKGNLTKHMKSKAHSKKCVDLGVSVGLIDEQDTEESDEKQRFSYERSGYDLEESDGPDEDDNENEDDDEDSQAESVLSATPSVTASPQHLPSRSSLQDPVSTDEDVRITDCFSGVHTDPMDVLPRALLTRMTVLSTAQSDYNRKTLSPGKARQRAARDENDTIPSVDTSRSPCHQMSVDYPESEEILRSSMAGKAVAITQSPSSVRLPPAAAEHSPQTAAGMPSVASPHPDPQEQKQQITLQPTPGLPSPHTHLFSHLPLHSQQQSRTPYNMVPVGGIHVVPAGLTYSTFVPLQAGPVQLTIPAVSVVHRTLGTHRNTVTEVSGTTNPAGVAELSSVVPCIPIGQIRVPGLQNLSTPGLQSLPSLSMETVNIVGLANTNMAPQVHPPGLALNAVGLQVLTANPSSQSSPAPQAHIPGLQILNIALPTLIPSVSQVAVDAQGAPEMPASQSKACETQPKQTSVASANQVSRTESPQGLPTVQRENAKKVLNPPAPAGDHARLDGLSKMDTEKAASANHVKPKPELTSIQGQPASTSQPLLKAHSEVFTKPSGQQTLSPDRQVPRPTALPRRQPTVHFSDVSSDDDEDRLVIAT.

Disordered regions lie at residues 58 to 182 (HLKK…CISS), 210 to 256 (LSQK…AESQ), and 335 to 373 (GLTS…PMPI). S141 bears the Phosphoserine mark. The span at 142 to 158 (ELRRWRSEGADPAKFSD) shows a compositional bias: basic and acidic residues. Composition is skewed to polar residues over residues 164–182 (DSSS…CISS) and 237–256 (KNSS…AESQ). The C2H2-type 1 zinc finger occupies 406-428 (YICEYCNRACAKPSVLLKHIRSH). T429 carries the phosphothreonine modification. Residues 434–456 (YPCVTCGFSFKTKSNLYKHKKSH) form a C2H2-type 2 zinc finger. S476, S479, S492, S495, S571, and S577 each carry phosphoserine. A disordered region spans residues 484-511 (SIHSDVEDSGESEEEGATDERQHDLGAM). Over residues 490–500 (EDSGESEEEGA) the composition is skewed to acidic residues. The interval 574–727 (RTDSPKAMDP…TPSALPTGEK (154 aa)) is disordered. Basic and acidic residues predominate over residues 576 to 585 (DSPKAMDPKP). The segment covering 588-612 (SSAQKQKDLQVTNVQPLSANMSQGG) has biased composition (polar residues). A compositionally biased stretch (basic and acidic residues) spans 617 to 626 (ETNENSHQKG). Composition is skewed to polar residues over residues 644–687 (AQLQ…QTVS) and 698–721 (STEQ…TPSA). Phosphoserine occurs at positions 670 and 681. The segment at 956–986 (GTMFECETCRNRYRKLENFENHKKFYCSELH) adopts a CCHC HIVEP-type zinc-finger fold. The segment at 1022–1062 (WEQTPQIRKRRKMKSVGDDEELQQNESGTSPKSSEGLQFQN) is disordered. 6 positions are modified to phosphoserine: S1036, S1051, S1091, S1158, S1161, and S1180. Positions 1045–1062 (QNESGTSPKSSEGLQFQN) are enriched in polar residues. Residues 1138 to 1169 (HTNSLSRPNSFDKPEPFERASPVSFQELNRTG) form a disordered region. Positions 1160-1169 (VSFQELNRTG) are enriched in polar residues. Composition is skewed to basic and acidic residues over residues 1202–1219 (LRGE…ERHV) and 1246–1259 (DLEA…KSEK). Disordered regions lie at residues 1202 to 1282 (LRGE…PKKK), 1384 to 1414 (RSKS…SRVG), and 1523 to 1548 (SHQS…VLSG). T1268 carries the phosphothreonine modification. 2 stretches are compositionally biased toward low complexity: residues 1394–1406 (TPPQ…ELQP) and 1523–1536 (SHQS…VSTQ). Residues S1735, S1740, S1749, and S1753 each carry the phosphoserine modification. Polar residues predominate over residues 1871-1883 (VRSSPAPSENTHI). Residues 1871-1911 (VRSSPAPSENTHISPLKCTDNNQERKSPGVKNQGDKVNIQE) are disordered. Residues S1884 and S2033 each carry the phosphoserine modification. 2 C2H2-type zinc fingers span residues 2088 to 2110 (YICE…IRTH) and 2116 to 2140 (YHCT…SKAH). 4 disordered regions span residues 2155–2228 (DEQD…PVST), 2265–2303 (SDYN…HQMS), 2327–2381 (SPSS…THLF), and 2572–2718 (PASQ…VIAT). The span at 2164-2175 (EKQRFSYERSGY) shows a compositional bias: basic and acidic residues. The span at 2176-2198 (DLEESDGPDEDDNENEDDDEDSQ) shows a compositional bias: acidic residues. 2 stretches are compositionally biased toward polar residues: residues 2199–2226 (AESV…QDPV) and 2288–2300 (TIPS…SPCH). Phosphoserine occurs at positions 2327 and 2599. A compositionally biased stretch (polar residues) spans 2573 to 2608 (ASQSKACETQPKQTSVASANQVSRTESPQGLPTVQR). Over residues 2623–2637 (DHARLDGLSKMDTEK) the composition is skewed to basic and acidic residues. Over residues 2651 to 2663 (TSIQGQPASTSQP) the composition is skewed to polar residues. 2 positions are modified to phosphoserine: S2669 and S2682.

In terms of assembly, interacts with UTP4.

Its subcellular location is the nucleus. It localises to the cytoplasm. This protein specifically binds to the DNA sequence 5'-GGGACTTTCC-3' which is found in the enhancer elements of numerous viral promoters such as those of SV40, CMV, or HIV-1. In addition, related sequences are found in the enhancer elements of a number of cellular promoters, including those of the class I MHC, interleukin-2 receptor, and interferon-beta genes. It may act in T-cell activation. Involved in activating HIV-1 gene expression. Isoform 2 and isoform 3 also bind to the IPCS (IRF1 and p53 common sequence) DNA sequence in the promoter region of interferon regulatory factor 1 and p53 genes and are involved in transcription regulation of these genes. Isoform 2 does not activate HIV-1 gene expression. Isoform 2 and isoform 3 may be involved in apoptosis. The polypeptide is Zinc finger protein 40 (HIVEP1) (Homo sapiens (Human)).